Consider the following 20-residue polypeptide: Protein PR-L2 (20 aa).

The tract at residues 1–20 (SVFAFENEQSSTIAPARLYK) is disordered.

Belongs to the BetVI family.

This Lupinus luteus (European yellow lupine) protein is Protein PR-L2.